Here is a 743-residue protein sequence, read N- to C-terminus: Phosphoribosylformylglycinamidine synthase subunit PurL (743 aa).

His-50 is an active-site residue. 2 residues coordinate ATP: Tyr-53 and Lys-92. Residue Glu-94 coordinates Mg(2+). Residues Ser-95–His-98 and Arg-117 contribute to the substrate site. His-96 acts as the Proton acceptor in catalysis. A Mg(2+)-binding site is contributed by Asp-118. Gln-241 provides a ligand contact to substrate. Position 269 (Asp-269) interacts with Mg(2+). Glu-313–Gln-315 provides a ligand contact to substrate. 2 residues coordinate ATP: Asp-494 and Gly-531. Asn-532 is a binding site for Mg(2+). Ser-534 contacts substrate.

Belongs to the FGAMS family. Monomer. Part of the FGAM synthase complex composed of 1 PurL, 1 PurQ and 2 PurS subunits.

The protein resides in the cytoplasm. It catalyses the reaction N(2)-formyl-N(1)-(5-phospho-beta-D-ribosyl)glycinamide + L-glutamine + ATP + H2O = 2-formamido-N(1)-(5-O-phospho-beta-D-ribosyl)acetamidine + L-glutamate + ADP + phosphate + H(+). It functions in the pathway purine metabolism; IMP biosynthesis via de novo pathway; 5-amino-1-(5-phospho-D-ribosyl)imidazole from N(2)-formyl-N(1)-(5-phospho-D-ribosyl)glycinamide: step 1/2. Its function is as follows. Part of the phosphoribosylformylglycinamidine synthase complex involved in the purines biosynthetic pathway. Catalyzes the ATP-dependent conversion of formylglycinamide ribonucleotide (FGAR) and glutamine to yield formylglycinamidine ribonucleotide (FGAM) and glutamate. The FGAM synthase complex is composed of three subunits. PurQ produces an ammonia molecule by converting glutamine to glutamate. PurL transfers the ammonia molecule to FGAR to form FGAM in an ATP-dependent manner. PurS interacts with PurQ and PurL and is thought to assist in the transfer of the ammonia molecule from PurQ to PurL. This chain is Phosphoribosylformylglycinamidine synthase subunit PurL, found in Sinorhizobium fredii (strain HH103).